The primary structure comprises 329 residues: Pantothenate kinase (329 aa).

Residues Met1–Pro22 are disordered. Gly107–Ser114 lines the ATP pocket.

This sequence belongs to the prokaryotic pantothenate kinase family.

Its subcellular location is the cytoplasm. It carries out the reaction (R)-pantothenate + ATP = (R)-4'-phosphopantothenate + ADP + H(+). It functions in the pathway cofactor biosynthesis; coenzyme A biosynthesis; CoA from (R)-pantothenate: step 1/5. The chain is Pantothenate kinase from Nocardioides sp. (strain ATCC BAA-499 / JS614).